The chain runs to 68 residues: MKKSTVIVLSLAAFVLLSVMQFSAAEDIKMEVEEQRGYCAEKGIKCHNIHCCSGLTCKCKGSSCVCRK.

Residues 1–25 form the signal peptide; the sequence is MKKSTVIVLSLAAFVLLSVMQFSAA. Residues 26 to 36 constitute a propeptide that is removed on maturation; it reads EDIKMEVEEQR. 4 disulfides stabilise this stretch: cysteine 39-cysteine 52, cysteine 46-cysteine 57, cysteine 51-cysteine 66, and cysteine 59-cysteine 64.

It belongs to the neurotoxin 33 family. Expressed by the venom gland.

It is found in the secreted. This Agelena orientalis (Funnel-web spider) protein is U4-agatoxin-Ao1a.